The sequence spans 283 residues: Non-selective voltage-gated ion channel VDAC1 (283 aa).

Position 2 is an N-acetylalanine (Ala-2). Lys-12 provides a ligand contact to ATP. Lys-12 participates in a covalent cross-link: Glycyl lysine isopeptide (Lys-Gly) (interchain with G-Cter in ubiquitin). Ser-13 carries the post-translational modification Phosphoserine. Thr-19 bears the Phosphothreonine mark. Lys-20 contributes to the ATP binding site. Lys-20 bears the N6-acetyllysine; alternate mark. Lys-20 bears the N6-succinyllysine; alternate mark. Lys-20 is covalently cross-linked (Glycyl lysine isopeptide (Lys-Gly) (interchain with G-Cter in ubiquitin); alternate). 2 beta stranded membrane passes run 26-35 (LIKLDLKTKS) and 39-47 (LEFTSSGSA). Glycyl lysine isopeptide (Lys-Gly) (interchain with G-Cter in ubiquitin) cross-links involve residues Lys-53 and Lys-61. The beta stranded transmembrane segment at 54 to 64 (VNGSLETKYRW) threads the bilayer. Tyr-67 carries the phosphotyrosine modification. Beta stranded transmembrane passes span 69 to 76 (LTFTEKWN), 80 to 89 (TLGTEITVED), and 95 to 104 (LKLTFDSSFS). Thr-107 carries the post-translational modification Phosphothreonine. The residue at position 109 (Lys-109) is an N6-acetyllysine; alternate. Lys-109 participates in a covalent cross-link: Glycyl lysine isopeptide (Lys-Gly) (interchain with G-Cter in ubiquitin); alternate. Lys-110 is covalently cross-linked (Glycyl lysine isopeptide (Lys-Gly) (interchain with G-Cter in ubiquitin)). 4 beta stranded membrane passes run 111-120 (NAKIKTGYKR), 123-130 (INLGCDVD), 137-145 (SIRGALVLG), and 150-158 (LAGYQMNFE). Phosphoserine is present on Ser-137. Lys-161 participates in a covalent cross-link: Glycyl lysine isopeptide (Lys-Gly) (interchain with G-Cter in ubiquitin). Beta stranded transmembrane passes span 163 to 175 (RVTQ…GYKT), 178 to 185 (FQLHTNVN), 189 to 198 (EFGGSIYQKV), 202 to 211 (LETAVNLAWT), 218 to 227 (RFGIAAKYQV), and 231 to 238 (ACFSAKVN). Position 193 is a phosphoserine; by NEK1 (Ser-193). Ser-240 bears the Phosphoserine mark. 242-244 (LIG) lines the NAD(+) pocket. The chain crosses the membrane as a beta stranded span at residues 242 to 251 (LIGLGYTQTL). Lys-252 is modified (N6-acetyllysine). Residues 254–263 (GIKLTLSALL) form a beta stranded membrane-spanning segment. 260–264 (SALLD) lines the NAD(+) pocket. Lys-266 is modified (N6-acetyllysine; alternate). A Glycyl lysine isopeptide (Lys-Gly) (interchain with G-Cter in ubiquitin); alternate cross-link involves residue Lys-266. The chain crosses the membrane as a beta stranded span at residues 273-282 (HKLGLGLEFQ). Residue Lys-274 forms a Glycyl lysine isopeptide (Lys-Gly) (interchain with G-Cter in ubiquitin) linkage.

It belongs to the eukaryotic mitochondrial porin family. As to quaternary structure, homodimer and homotrimer; in response to cyclic AMP or calcium; oligomerization is required for scramblase activity. Component of the mitochondrial permeability transition pore complex (mPTPC), at least composed of SPG7, VDAC1 and PPIF. Interacts with SPG7, NIPSNAP2 and SLC25A30. Interacts with hexokinases including HK1. The HK1-VDAC1 complex interacts with ATF2. Interacts with BCL2L1. Interacts with BAK1. Interacts with RTL10/BOP (via BH3 domain). Interacts with amyloid-beta and APP; induces VDAC1 dephosphorylation. Interacts with TMEM41B. Interacts with BCAP31. Interacts with HSPA9; this interaction couples ITPR1 to VDAC1. Phosphorylation at Ser-193 by NEK1 promotes the closed conformational state preventing excessive mitochondrial membrane permeability and subsequent apoptotic cell death after injury. Phosphorylation by the AKT-GSK3B axis stabilizes the protein probably by preventing ubiquitin-mediated proteasomal degradation. In terms of processing, ubiquitinated. Undergoes monoubiquitination and polyubiquitination by PRKN; monoubiquitination at Lys-274 inhibits apoptosis, whereas polyubiquitination leads to its degradation and promotes mitophagy. Deubiquitinated by USP30. Widely expressed. High levels in heart and kidney with lower levels in brain and ascitic tumor. Very low levels in liver.

It localises to the mitochondrion outer membrane. The protein resides in the cell membrane. The protein localises to the membrane raft. It carries out the reaction Ca(2+)(in) = Ca(2+)(out). The enzyme catalyses Na(+)(in) = Na(+)(out). The catalysed reaction is chloride(in) = chloride(out). It catalyses the reaction Mg(2+)(in) = Mg(2+)(out). It carries out the reaction K(+)(in) = K(+)(out). The enzyme catalyses ATP(in) = ATP(out). The catalysed reaction is L-glutamate(out) = L-glutamate(in). It catalyses the reaction dopamine(out) = dopamine(in). It carries out the reaction acetylcholine(in) = acetylcholine(out). The enzyme catalyses Fe(III)-[cytochrome c](out) = Fe(III)-[cytochrome c](in). The catalysed reaction is a 1,2-diacyl-sn-glycero-3-phosphocholine(in) = a 1,2-diacyl-sn-glycero-3-phosphocholine(out). It catalyses the reaction a 1,2-diacyl-sn-glycero-3-phospho-L-serine(in) = a 1,2-diacyl-sn-glycero-3-phospho-L-serine(out). With respect to regulation, inhibited by nitric oxide. Voltage-gated ion channel activity is inhibited by lanthanum(3+) and ruthenium red. Mitochondrial calcium transport is inhibited by lanthanum(3+), ruthenium red and Ru360. Non-selective voltage-gated ion channel that mediates the transport of anions and cations through the mitochondrion outer membrane and plasma membrane. The channel at the outer mitochondrial membrane allows diffusion of small hydrophilic molecules; in the plasma membrane it is involved in cell volume regulation and apoptosis. It adopts an open conformation at low or zero membrane potential and a closed conformation at potentials above 30-40 mV. The open state has a weak anion selectivity whereas the closed state is cation-selective. Binds various signaling molecules, including the sphingolipid ceramide, the phospholipid phosphatidylcholine, and the sterols cholesterol and oxysterol. In depolarized mitochondria, acts downstream of PRKN and PINK1 to promote mitophagy or prevent apoptosis; polyubiquitination by PRKN promotes mitophagy, while monoubiquitination by PRKN decreases mitochondrial calcium influx which ultimately inhibits apoptosis. May participate in the formation of the permeability transition pore complex (PTPC) responsible for the release of mitochondrial products that triggers apoptosis. May mediate ATP export from cells. Part of a complex composed of HSPA9, ITPR1 and VDAC1 that regulates mitochondrial calcium-dependent apoptosis by facilitating calcium transport from the ER lumen to the mitochondria intermembrane space thus providing calcium for the downstream calcium channel MCU that directly releases it into mitochondria matrix. In terms of biological role, catalyzes the scrambling of phospholipids across the outer mitochondrial membrane; the mechanism is unrelated to channel activity and is capable of translocating both anionic and zwitterionic phospholipids. This chain is Non-selective voltage-gated ion channel VDAC1, found in Rattus norvegicus (Rat).